Reading from the N-terminus, the 395-residue chain is Prostaglandin D2 receptor 2 (395 aa).

The Extracellular segment spans residues Met-1–His-33. Asn-4 and Asn-25 each carry an N-linked (GlcNAc...) asparagine glycan. A helical membrane pass occupies residues Ala-34–Val-56. The Cytoplasmic segment spans residues Val-57–Thr-67. The helical transmembrane segment at Thr-68–Tyr-89 threads the bilayer. The Extracellular portion of the chain corresponds to Phe-90–Leu-106. Cys-104 and Cys-182 are oxidised to a cystine. A helical transmembrane segment spans residues His-107–Leu-127. At Asp-128 to Ala-146 the chain is on the cytoplasmic side. The chain crosses the membrane as a helical span at residues Ala-147 to Val-168. Residues Phe-169–Lys-210 are Extracellular-facing. The chain crosses the membrane as a helical span at residues Phe-211–Leu-231. Over Arg-232–Leu-247 the chain is Cytoplasmic. A helical transmembrane segment spans residues Val-248–Glu-269. Over Ala-270–Phe-288 the chain is Extracellular. The helical transmembrane segment at Val-289 to Cys-308 threads the bilayer. Topologically, residues Pro-309 to Ser-395 are cytoplasmic. Positions Asp-330–Leu-333 match the Involved in the recycling of CRTH2 motif. A phosphoserine mark is found at Ser-331 and Ser-345. The segment at Leu-333–Pro-363 is disordered.

It belongs to the G-protein coupled receptor 1 family. In terms of processing, phosphorylated. As to expression, widespread expression. High expression in stomach, small intestine, heart and thymus. Intermediate expression in colon, spinal cord and peripheral blood and low expression in brain, skeletal muscle and spleen. Expressed also on Th2- and Tc2- type cells, eosinophils and basophils.

It localises to the cell membrane. Functionally, receptor for prostaglandin D2 (PGD2). Coupled to the G(i)-protein. Receptor activation may result in pertussis toxin-sensitive decreases in cAMP levels and Ca(2+) mobilization. PI3K signaling is also implicated in mediating PTGDR2 effects. PGD2 induced receptor internalization. CRTH2 internalization can be regulated by diverse kinases such as, PKC, PKA, GRK2, GPRK5/GRK5 and GRK6. Receptor activation is responsible, at least in part, in immune regulation and allergic/inflammation responses. The polypeptide is Prostaglandin D2 receptor 2 (PTGDR2) (Homo sapiens (Human)).